A 235-amino-acid polypeptide reads, in one-letter code: Lipoprotein-releasing system ATP-binding protein LolD (235 aa).

Positions 5-235 constitute an ABC transporter domain; the sequence is FALANIYKSF…SIDESGFNKI (231 aa). ATP is bound at residue 40-47; sequence GKSGSGKS.

This sequence belongs to the ABC transporter superfamily. Lipoprotein translocase (TC 3.A.1.125) family. In terms of assembly, the complex is composed of two ATP-binding proteins (LolD) and two transmembrane proteins (LolC and LolE).

It localises to the cell inner membrane. Functionally, part of the ABC transporter complex LolCDE involved in the translocation of mature outer membrane-directed lipoproteins, from the inner membrane to the periplasmic chaperone, LolA. Responsible for the formation of the LolA-lipoprotein complex in an ATP-dependent manner. The protein is Lipoprotein-releasing system ATP-binding protein LolD of Ehrlichia chaffeensis (strain ATCC CRL-10679 / Arkansas).